Here is a 335-residue protein sequence, read N- to C-terminus: uncharacterized protein (335 aa).

This is an uncharacterized protein from Methanocaldococcus jannaschii (strain ATCC 43067 / DSM 2661 / JAL-1 / JCM 10045 / NBRC 100440) (Methanococcus jannaschii).